A 358-amino-acid chain; its full sequence is DnaJ homolog subfamily C member 18 (358 aa).

The 65-residue stretch at 82–146 (NYYEILGVSR…DKRLRYDEYG (65 aa)) folds into the J domain. The chain crosses the membrane as a helical span at residues 228 to 248 (AFIQLLPVLVIVIISVITQLL).

The protein resides in the endoplasmic reticulum membrane. The polypeptide is DnaJ homolog subfamily C member 18 (DNAJC18) (Bos taurus (Bovine)).